A 171-amino-acid polypeptide reads, in one-letter code: Co-chaperone protein HscB (171 aa).

The 73-residue stretch at 2-74 folds into the J domain; it reads DYFTLFGLPA…LMRAEYLLSL (73 aa).

Belongs to the HscB family. As to quaternary structure, interacts with HscA and stimulates its ATPase activity. Interacts with IscU.

Functionally, co-chaperone involved in the maturation of iron-sulfur cluster-containing proteins. Seems to help targeting proteins to be folded toward HscA. In Escherichia coli (strain SMS-3-5 / SECEC), this protein is Co-chaperone protein HscB.